Consider the following 467-residue polypeptide: ATP-dependent protease ATPase subunit HslU (467 aa).

ATP-binding positions include V22 and 64–69; that span reads GVGKTE. A disordered region spans residues 149–192; sequence QTNNPLESLFGGAIPNFGQNNEDEEEPPTEEIKTKRSEIKRQLE. Residues 178-192 show a composition bias toward basic and acidic residues; it reads EEIKTKRSEIKRQLE. 3 residues coordinate ATP: D280, E345, and R417.

Belongs to the ClpX chaperone family. HslU subfamily. In terms of assembly, a double ring-shaped homohexamer of HslV is capped on each side by a ring-shaped HslU homohexamer. The assembly of the HslU/HslV complex is dependent on binding of ATP.

Its subcellular location is the cytoplasm. In terms of biological role, ATPase subunit of a proteasome-like degradation complex; this subunit has chaperone activity. The binding of ATP and its subsequent hydrolysis by HslU are essential for unfolding of protein substrates subsequently hydrolyzed by HslV. HslU recognizes the N-terminal part of its protein substrates and unfolds these before they are guided to HslV for hydrolysis. This is ATP-dependent protease ATPase subunit HslU from Staphylococcus aureus (strain bovine RF122 / ET3-1).